The chain runs to 474 residues: A-type ATP synthase subunit B (474 aa).

Belongs to the ATPase alpha/beta chains family. Has multiple subunits with at least A(3), B(3), C, D, E, F, H, I and proteolipid K(x).

The protein resides in the cell membrane. Its function is as follows. Component of the A-type ATP synthase that produces ATP from ADP in the presence of a proton gradient across the membrane. The B chain is a regulatory subunit. In Halorubrum lacusprofundi (strain ATCC 49239 / DSM 5036 / JCM 8891 / ACAM 34), this protein is A-type ATP synthase subunit B.